We begin with the raw amino-acid sequence, 207 residues long: Small ribosomal subunit protein uS4c (207 aa).

The region spanning 92 to 155 (MRLDNILFRL…TYQSILSKRI (64 aa)) is the S4 RNA-binding domain.

It belongs to the universal ribosomal protein uS4 family. Part of the 30S ribosomal subunit. Contacts protein S5. The interaction surface between S4 and S5 is involved in control of translational fidelity.

The protein localises to the plastid. It is found in the chloroplast. Functionally, one of the primary rRNA binding proteins, it binds directly to 16S rRNA where it nucleates assembly of the body of the 30S subunit. In terms of biological role, with S5 and S12 plays an important role in translational accuracy. This Equisetum giganteum (Giant horsetail) protein is Small ribosomal subunit protein uS4c (rps4).